The chain runs to 784 residues: Cyclin-dependent kinase 11B (784 aa).

The span at Q18–I60 shows a compositional bias: basic and acidic residues. Residues Q18–A401 form a disordered region. Residues S47 and S72 each carry the phosphoserine modification. Residues E95 to S113 show a composition bias toward basic residues. Basic and acidic residues-rich tracts occupy residues H114–H131, R138–K227, and P238–L263. S115 is modified (phosphoserine). S270 is modified (phosphoserine). Residues S278–G289 are compositionally biased toward low complexity. Acidic residues-rich tracts occupy residues S290–E353 and D372–G381. The region spanning F427–F712 is the Protein kinase domain. ATP contacts are provided by residues I433 to V441 and K456. S471 bears the Phosphoserine; by CDK7 mark. T477 is modified (phosphothreonine; by CDK7). The Proton acceptor role is filled by D551. The residue at position 578 (S578) is a Phosphoserine. Y583 carries the post-translational modification Phosphotyrosine. T584 is subject to Phosphothreonine. A Glycyl lysine isopeptide (Lys-Gly) (interchain with G-Cter in SUMO2) cross-link involves residue K630. The tract at residues S722–F784 is disordered. At T740 the chain carries Phosphothreonine. S741 bears the Phosphoserine mark.

It belongs to the protein kinase superfamily. CMGC Ser/Thr protein kinase family. CDC2/CDKX subfamily. In terms of assembly, may interact PAK1 and RANBP9. p110C interacts with RNPS1. Interacts with CCND3. Interacts with CCNL1 and CCNL2. Forms complexes with pre-mRNA-splicing factors, including at least SRSF1, SRSF2 AND SRSF7/SLU7. The cofactor is Mg(2+). In terms of processing, phosphorylation at Ser-115 creates a binding site for 14-3-3 proteins.

The catalysed reaction is L-seryl-[protein] + ATP = O-phospho-L-seryl-[protein] + ADP + H(+). It carries out the reaction L-threonyl-[protein] + ATP = O-phospho-L-threonyl-[protein] + ADP + H(+). Its activity is regulated as follows. Phosphorylation at Thr-437 or Tyr-438 inactivates the enzyme, while phosphorylation at Thr-584 activates it. Functionally, plays multiple roles in cell cycle progression, cytokinesis and apoptosis. Involved in pre-mRNA splicing in a kinase activity-dependent manner. May act as a negative regulator of normal cell cycle progression. This is Cyclin-dependent kinase 11B (Cdk11b) from Mus musculus (Mouse).